The following is a 257-amino-acid chain: Putative carboxymethylenebutenolidase (257 aa).

Catalysis depends on residues C148, D195, and H226.

Belongs to the dienelactone hydrolase family.

It catalyses the reaction 2-(5-oxo-2,5-dihydrofuran-2-ylidene)acetate + H2O = 4-oxohex-2-enedioate + H(+). The chain is Putative carboxymethylenebutenolidase from Saccharolobus solfataricus (strain ATCC 35092 / DSM 1617 / JCM 11322 / P2) (Sulfolobus solfataricus).